Here is a 262-residue protein sequence, read N- to C-terminus: Triosephosphate isomerase (262 aa).

13 to 15 is a binding site for substrate; that stretch reads NWK. The active-site Electrophile is His-103. The active-site Proton acceptor is the Glu-175. Substrate contacts are provided by residues Gly-181, Ser-221, and 242-243; that span reads GG.

It belongs to the triosephosphate isomerase family. As to quaternary structure, homodimer.

It localises to the cytoplasm. The catalysed reaction is D-glyceraldehyde 3-phosphate = dihydroxyacetone phosphate. It participates in carbohydrate biosynthesis; gluconeogenesis. It functions in the pathway carbohydrate degradation; glycolysis; D-glyceraldehyde 3-phosphate from glycerone phosphate: step 1/1. Functionally, involved in the gluconeogenesis. Catalyzes stereospecifically the conversion of dihydroxyacetone phosphate (DHAP) to D-glyceraldehyde-3-phosphate (G3P). In Corynebacterium efficiens (strain DSM 44549 / YS-314 / AJ 12310 / JCM 11189 / NBRC 100395), this protein is Triosephosphate isomerase.